Reading from the N-terminus, the 570-residue chain is Urease subunit alpha (570 aa).

The Urease domain maps to 133–570 (GGIDNHIHYI…LPLAQLYNLF (438 aa)). Histidine 138, histidine 140, and lysine 221 together coordinate Ni(2+). Lysine 221 carries the post-translational modification N6-carboxylysine. Histidine 223 serves as a coordination point for substrate. Ni(2+) contacts are provided by histidine 250 and histidine 276. Histidine 324 (proton donor) is an active-site residue. Ni(2+) is bound at residue aspartate 364.

It belongs to the metallo-dependent hydrolases superfamily. Urease alpha subunit family. As to quaternary structure, heterotrimer of UreA (gamma), UreB (beta) and UreC (alpha) subunits. Three heterotrimers associate to form the active enzyme. It depends on Ni cation as a cofactor. Post-translationally, carboxylation allows a single lysine to coordinate two nickel ions.

The protein localises to the cytoplasm. The catalysed reaction is urea + 2 H2O + H(+) = hydrogencarbonate + 2 NH4(+). It functions in the pathway nitrogen metabolism; urea degradation; CO(2) and NH(3) from urea (urease route): step 1/1. The chain is Urease subunit alpha from Cytophaga hutchinsonii (strain ATCC 33406 / DSM 1761 / CIP 103989 / NBRC 15051 / NCIMB 9469 / D465).